We begin with the raw amino-acid sequence, 455 residues long: Acid sphingomyelinase-like phosphodiesterase 3b (455 aa).

The signal sequence occupies residues methionine 1 to alanine 18. Zn(2+) contacts are provided by aspartate 28 and histidine 30. Cysteines 45 and 64 form a disulfide. N-linked (GlcNAc...) asparagine glycosylation is present at asparagine 72. Positions 93 and 134 each coordinate Zn(2+). Asparagine 164 carries N-linked (GlcNAc...) asparagine glycosylation. Histidine 236, histidine 277, and histidine 279 together coordinate Zn(2+). Residue asparagine 343 is glycosylated (N-linked (GlcNAc...) asparagine). 2 disulfide bridges follow: cysteine 405–cysteine 409 and cysteine 415–cysteine 428.

The protein belongs to the acid sphingomyelinase family. In terms of assembly, interacts with TLR4, TLR7, TLR8 and TLR9. Requires Zn(2+) as cofactor. N-glycosylated.

The protein localises to the secreted. It is found in the cell membrane. Its function is as follows. Lipid-modulating phosphodiesterase. Active on the surface of macrophages and dendritic cells and strongly influences macrophage lipid composition and membrane fluidity. Acts as a negative regulator of Toll-like receptor signaling. Has in vitro phosphodiesterase activity, but the physiological substrate is unknown. Lacks activity with phosphocholine-containing lipids, but can cleave CDP-choline, and can release phosphate from ATP and ADP (in vitro). In Homo sapiens (Human), this protein is Acid sphingomyelinase-like phosphodiesterase 3b (SMPDL3B).